The following is a 564-amino-acid chain: MIRQCVSHRGIPCYRLAVRRVELTEPFHHPSPRPLGRKNWSTSDEAKSKRAAMRKGGAPPPEHEDWELTVGIEIHAQLDTDAKLFSRASAALDDVPNSNIALFDIALPGSQPLFQPSTLIPAIRAAIALNCDIQRIRGQRIYELTHRLIEPYAKNGSIWLGAHDGIAKEDGEGVQIGIKQIQMEQDTAKSQELPSSTYLLDFNRVSRPLIEIITLPQIHSATTAAACVRKIQAILQSVGAVTTGMEMGGLRADVNVSVRKRSEAAGDHQYDGVAGLGQRTEIKNLSSFKAVEYAIIAERDRQIAVLKAGGTIQGETRGWTLGSTETRKLRGKEGEVDYRYMPDPDLGPVIIGDDVISDLRRNIPVLPDELLQMLVQDPKYGLSTVDAKTLIELDDGQRLEYYQDAVEILITLQPDLSADFSAGKVVGNWVLHELGGLLTKSSAHWDSQRVPAQSLAEIINLLSRKNITSSSAKSLLAMAFDGDKRSISQIVEDKNLLFQSLSRHEYIALAEEVMRQNPKMVSEIREKGQLGKMGWFVGQIKRIGDPNRVEAQKAEEILRELILK.

Residues 1–88 constitute a mitochondrion transit peptide; it reads MIRQCVSHRG…DTDAKLFSRA (88 aa). Positions 26–63 are disordered; the sequence is PFHHPSPRPLGRKNWSTSDEAKSKRAAMRKGGAPPPEH.

This sequence belongs to the GatB/GatE family. GatB subfamily. Subunit of the heterotrimeric GatCAB amidotransferase (AdT) complex, composed of A, B and C subunits.

Its subcellular location is the mitochondrion. The enzyme catalyses L-glutamyl-tRNA(Gln) + L-glutamine + ATP + H2O = L-glutaminyl-tRNA(Gln) + L-glutamate + ADP + phosphate + H(+). In terms of biological role, allows the formation of correctly charged Gln-tRNA(Gln) through the transamidation of misacylated Glu-tRNA(Gln) in the mitochondria. The reaction takes place in the presence of glutamine and ATP through an activated gamma-phospho-Glu-tRNA(Gln). This is Glutamyl-tRNA(Gln) amidotransferase subunit B, mitochondrial from Ajellomyces capsulatus (strain G186AR / H82 / ATCC MYA-2454 / RMSCC 2432) (Darling's disease fungus).